A 365-amino-acid polypeptide reads, in one-letter code: PR domain zinc finger protein 12 (365 aa).

The SET domain maps to 86–203 (VEVIIAQSSI…PDQELLVWYG (118 aa)). 3 C2H2-type zinc fingers span residues 243-265 (MRCVICHRGFNSRSNLRSHMRIH), 271-293 (FVCRFCNRRFSQSSTLRNHVRLH), and 299-323 (YKCQVCQSAYSQLAGLRAHQKSARH). Residues 318–338 (QKSARHRPPSTALQAHSPALP) are disordered. The span at 329–338 (ALQAHSPALP) shows a compositional bias: low complexity.

This sequence belongs to the class V-like SAM-binding methyltransferase superfamily. As to quaternary structure, interacts with EHMT2.

It is found in the nucleus. Transcriptional regulator necessary for the development of nociceptive neurons, playing a key role in determining the nociceptive lineage from neural crest cell progenitors. Initiates neurogenesis and activates downstream pro-neuronal transcription factors, such as NEUROD1, BRN3A, and ISL1, specifically within nociceptive neurons, while repressing non-nociceptor cell fates. Essential for the proper function of nociceptors in adults, influencing both their excitability and their gene expression, thereby impacting how these neurons respond to various pain stimuli. This chain is PR domain zinc finger protein 12 (Prdm12), found in Mus musculus (Mouse).